A 277-amino-acid polypeptide reads, in one-letter code: NAD kinase (277 aa).

The active-site Proton acceptor is Asp-67. Residues 67 to 68, Arg-72, 137 to 138, Lys-148, Arg-165, Asp-167, 178 to 183, Leu-202, and Gln-236 each bind NAD(+); these read DG, NE, and TGYAMS.

This sequence belongs to the NAD kinase family. The cofactor is a divalent metal cation.

The protein resides in the cytoplasm. The enzyme catalyses NAD(+) + ATP = ADP + NADP(+) + H(+). In terms of biological role, involved in the regulation of the intracellular balance of NAD and NADP, and is a key enzyme in the biosynthesis of NADP. Catalyzes specifically the phosphorylation on 2'-hydroxyl of the adenosine moiety of NAD to yield NADP. In Pyrococcus furiosus (strain ATCC 43587 / DSM 3638 / JCM 8422 / Vc1), this protein is NAD kinase.